The following is a 162-amino-acid chain: Precursor protein UG (162 aa).

The N-terminal stretch at methionine 1–alanine 19 is a signal peptide. Positions asparagine 20–proline 23 are excised as a propeptide. Cystine bridges form between cysteine 30-cysteine 42 and cysteine 33-cysteine 49. The propeptide occupies valine 56–proline 59. Disulfide bonds link cysteine 66–cysteine 78 and cysteine 69–cysteine 85. A propeptide spanning residues valine 92–proline 95 is cleaved from the precursor. 2 disulfides stabilise this stretch: cysteine 102-cysteine 114 and cysteine 105-cysteine 121. A propeptide spanning residues valine 128–proline 131 is cleaved from the precursor. 2 cysteine pairs are disulfide-bonded: cysteine 138–cysteine 150 and cysteine 141–cysteine 157.

Belongs to the sea anemone BBH family.

The protein resides in the secreted. It is found in the nematocyst. Affects the ASIC3 channel (ACCN3) and produces analgesic effects. It produces a reversible inhibition effect on both the transient and the sustained current of human ASIC3 channels expressed in X.laevis oocytes. It completely blocks the transient component (IC(50)=10 uM) and partially (48%) inhibits the amplitude of the sustained component (IC(50)=1.44 uM). Using in vivo tests in mice, it reverses inflammatory and acid-induced pain. In terms of biological role, does not affect the ASIC3 channel. Does not cause lethality or paralysis of noble crayfish (A.astacus) at a dose of 1 mg/kg. In Urticina grebelnyi (Painted anemone), this protein is Precursor protein UG.